Reading from the N-terminus, the 239-residue chain is Ribosomal RNA small subunit methyltransferase G (239 aa).

S-adenosyl-L-methionine is bound by residues Gly-77, Phe-82, Ala-128 to Glu-129, and Arg-147. The interval Ile-215–Gly-239 is disordered. A compositionally biased stretch (basic residues) spans Arg-216–Arg-227.

The protein belongs to the methyltransferase superfamily. RNA methyltransferase RsmG family.

Its subcellular location is the cytoplasm. Its function is as follows. Specifically methylates the N7 position of guanine in position 535 of 16S rRNA. The protein is Ribosomal RNA small subunit methyltransferase G of Bacillus velezensis (strain DSM 23117 / BGSC 10A6 / LMG 26770 / FZB42) (Bacillus amyloliquefaciens subsp. plantarum).